A 664-amino-acid chain; its full sequence is MDSSHQSNYKLSKTEKKFLRKQIKARHTLLRHEGIETVSYATQSLVVANGGLGNGVSRNQLLPVLEKCGLVDALLMPPNKPYSFARYKTTEESKRAYVTLNGKEVVDDLGQKIILYLNFVEKAQWKELRPQALPPGLMVVEEIISSEEEKMLLESVDWTEDTDNQNSQKSLKHRRVKHFGYEFHYENNNVDKDKPLPGGLPDICDSFLEKWLREGYIKHKPDQMTINQYEPGQGIPAHIDTHSAFEDEIVSLSLGSEIVMDFKHPDGTAVPVMLPRRSLLVMTGESRYLWTHGITCRKFDTVQASENHKSGIITSDVGDLTLSKRGLRTSFTFRKVRQTPCNCSYPLVCDSQRKETPPSFPESDEEASRLEQEYVHQVYEEIAGHFSSTRHTPWPHIVEFLKALPSGSIVADIGCGNGKYLGVNKELYMVGCDRSQNLVDICRERQFQAFVCDALAVPVRSGSCDACISIAVIHHFATAERRVAALQEIVRLLRPGGKALIYVWAMEQEYNKQKSKYLKGNRNSQGKKEEMNSDTSVQRSLVEQMPDMGSRDSASSVPRINDSQEGGCNSRQVSNSKLPIHVNRTSFYSQDMLVPWHLKGNPDKGKPVEPFGPIGSQDPSPVFHRYYHVFREGELEALCRTVSDVRILQSYYDQGNWCVILQKA.

Residues 43–120 (QSLVVANGGL…QKIILYLNFV (78 aa)) form the RRM domain. A Fe2OG dioxygenase domain is found at 220-337 (KPDQMTINQY…RTSFTFRKVR (118 aa)). Residue 227-229 (NQY) participates in 2-oxoglutarate binding. Residues histidine 238 and aspartate 240 each contribute to the Fe cation site. Zn(2+) is bound at residue histidine 242. Position 292 (histidine 292) interacts with Fe cation. 2-oxoglutarate is bound by residues arginine 328 and arginine 334. Residues cysteine 341, cysteine 343, and cysteine 349 each contribute to the Zn(2+) site. The methyltransferase domain stretch occupies residues 411–664 (ADIGCGNGKY…GNWCVILQKA (254 aa)). The segment at 516 to 575 (KYLKGNRNSQGKKEEMNSDTSVQRSLVEQMPDMGSRDSASSVPRINDSQEGGCNSRQVSN) is disordered. The segment covering 552 to 575 (DSASSVPRINDSQEGGCNSRQVSN) has biased composition (polar residues).

The protein belongs to the alkB family. Interacts with TRMT112. The cofactor is Fe(2+).

It is found in the cytoplasm. The protein localises to the nucleus. The enzyme catalyses 5-(carboxymethyl)uridine(34) in tRNA + S-adenosyl-L-methionine = 5-(2-methoxy-2-oxoethyl)uridine(34) in tRNA + S-adenosyl-L-homocysteine. Catalyzes the methylation of 5-carboxymethyl uridine to 5-methylcarboxymethyl uridine at the wobble position of the anticodon loop in tRNA via its methyltransferase domain. Catalyzes the last step in the formation of 5-methylcarboxymethyl uridine at the wobble position of the anticodon loop in target tRNA. Has a preference for tRNA(Arg) and tRNA(Glu), and does not bind tRNA(Lys). Binds tRNA and catalyzes the iron and alpha-ketoglutarate dependent hydroxylation of 5-methylcarboxymethyl uridine at the wobble position of the anticodon loop in tRNA via its dioxygenase domain, giving rise to 5-(S)-methoxycarbonylhydroxymethyluridine; has a preference for tRNA(Gly). Required for normal survival after DNA damage. May inhibit apoptosis and promote cell survival and angiogenesis. The sequence is that of tRNA (carboxymethyluridine(34)-5-O)-methyltransferase ALKBH8 (ALKBH8) from Macaca fascicularis (Crab-eating macaque).